Consider the following 130-residue polypeptide: Fluoride-specific ion channel FluC (130 aa).

4 consecutive transmembrane segments (helical) span residues 2 to 22 (GLLL…RFAL), 36 to 56 (GILL…AFLI), 71 to 91 (FLLV…SLDI), and 100 to 120 (IFIA…AVIL). Residues Gly-79 and Thr-82 each coordinate Na(+).

The protein belongs to the fluoride channel Fluc/FEX (TC 1.A.43) family.

It is found in the cell inner membrane. The enzyme catalyses fluoride(in) = fluoride(out). With respect to regulation, na(+) is not transported, but it plays an essential structural role and its presence is essential for fluoride channel function. Functionally, fluoride-specific ion channel. Important for reducing fluoride concentration in the cell, thus reducing its toxicity. This Francisella tularensis subsp. tularensis (strain FSC 198) protein is Fluoride-specific ion channel FluC.